The sequence spans 118 residues: RxLR effector protein PITG_19617 (118 aa).

Residues 1–21 (MRAVYILAMACAATLQASSSA) form the signal peptide. A RxLR-dEER motif is present at residues 50–64 (RLLRVEDKEEETEEE).

Belongs to the RxLR effector family.

The protein resides in the secreted. Its subcellular location is the host nucleus. The protein localises to the host cytoplasm. Functionally, effector that enhances P.infestans colonization of Nicotiana benthamiana leaves. In Phytophthora infestans (strain T30-4) (Potato late blight agent), this protein is RxLR effector protein PITG_19617.